Here is a 252-residue protein sequence, read N- to C-terminus: MAGIDLNADLGEGFGVWRLGDDDAMLGIVSSANVACGFHAGDPAGLLRVCRSAAERGVRVGAQVSYRDLAGFGRRFIDVAADELLADVVYQIGALQAIAHAAGSSVCYVKPHGALYNTIVTHPAQAAAVAEAVRLVDPGLPVLGMAGSVFFDEAARRGLRVVAEAFADRAYRPDGRLVSRREPGAVLADPAAIAERVLAMVDTGAVTAVNGTRLELSVESVCVHGDSPGAVQIATAVRDRLRAAGVEIRAFC.

Belongs to the LamB/PxpA family. In terms of assembly, forms a complex composed of PxpA, PxpB and PxpC.

The enzyme catalyses 5-oxo-L-proline + ATP + 2 H2O = L-glutamate + ADP + phosphate + H(+). Functionally, catalyzes the cleavage of 5-oxoproline to form L-glutamate coupled to the hydrolysis of ATP to ADP and inorganic phosphate. The polypeptide is 5-oxoprolinase subunit A (Mycolicibacterium paratuberculosis (strain ATCC BAA-968 / K-10) (Mycobacterium paratuberculosis)).